The sequence spans 420 residues: Gamma-glutamyl phosphate reductase (420 aa).

Belongs to the gamma-glutamyl phosphate reductase family.

It localises to the cytoplasm. It catalyses the reaction L-glutamate 5-semialdehyde + phosphate + NADP(+) = L-glutamyl 5-phosphate + NADPH + H(+). It functions in the pathway amino-acid biosynthesis; L-proline biosynthesis; L-glutamate 5-semialdehyde from L-glutamate: step 2/2. Its function is as follows. Catalyzes the NADPH-dependent reduction of L-glutamate 5-phosphate into L-glutamate 5-semialdehyde and phosphate. The product spontaneously undergoes cyclization to form 1-pyrroline-5-carboxylate. This Streptococcus pneumoniae (strain JJA) protein is Gamma-glutamyl phosphate reductase.